The following is a 1256-amino-acid chain: Neuronal cell adhesion molecule (1256 aa).

The signal sequence occupies residues 1–29 (MQLKIMPKKKHLSAGGVPLILFLCQMISA). Over 30–1119 (LDVPLDLVQP…ASRQVDIATQ (1090 aa)) the chain is Extracellular. Ig-like C2-type domains follow at residues 40 to 128 (PTIT…AAVS) and 135 to 229 (PSRS…QPIS). Disulfide bonds link Cys62/Cys117 and Cys161/Cys212. Residue Asn77 is glycosylated (N-linked (GlcNAc...) asparagine). 6 N-linked (GlcNAc...) asparagine glycosylation sites follow: Asn217, Asn239, Asn245, Asn270, Asn308, and Asn371. Ig-like C2-type domains are found at residues 261 to 350 (PPTF…ISVT), 355 to 442 (PYWI…AFVN), 448 to 535 (PRIL…VHLE), and 539 to 626 (PTRI…AVLR). A disulfide bridge links Cys286 with Cys334. A disulfide bridge connects residues Cys376 and Cys426. 2 N-linked (GlcNAc...) asparagine glycosylation sites follow: Asn427 and Asn501. Cystine bridges form between Cys470-Cys519 and Cys561-Cys610. 8 N-linked (GlcNAc...) asparagine glycosylation sites follow: Asn613, Asn710, Asn796, Asn852, Asn987, Asn1003, Asn1013, and Asn1067. 4 Fibronectin type-III domains span residues 643–738 (PPFD…TKAA), 740–837 (PDQN…SGED), 842–944 (APGN…TPEG), and 948–1045 (APSS…VDEA). A helical transmembrane segment spans residues 1120–1142 (GWFIGLMCAVALLILILLIVCFI). Over 1143–1256 (RRNKGGKYPV…SPVNAMNSFV (114 aa)) the chain is Cytoplasmic. Basic and acidic residues predominate over residues 1151-1171 (PVKEKEDAHADPEIQPMKEDD). The disordered stretch occupies residues 1151–1256 (PVKEKEDAHA…SPVNAMNSFV (106 aa)). Thr1173 is subject to Phosphothreonine. Tyr1177 bears the Phosphotyrosine mark. Phosphoserine is present on Ser1178. Over residues 1193–1202 (PSDRTVKKED) the composition is skewed to basic and acidic residues. 6 positions are modified to phosphoserine: Ser1203, Ser1206, Ser1223, Ser1242, Ser1243, and Ser1247. Positions 1240 to 1256 (NESSEAPSPVNAMNSFV) are enriched in polar residues.

It belongs to the immunoglobulin superfamily. L1/neurofascin/NgCAM family. Constituent of a NFASC/NRCAM/ankyrin-G complex. Detected in a complex with CNTN1 and PTPRB. Interacts with GLDN/gliomedin and MYOC. In terms of tissue distribution, detected in sciatic nerve. Detected in brain, especially in the cerebellum Purkinje cell layer, inner granule cell layer and molecular layer (at protein level). Detected in neurons and Schwann cells.

It is found in the cell membrane. The protein localises to the cell projection. Its subcellular location is the axon. It localises to the secreted. Functionally, cell adhesion protein that is required for normal responses to cell-cell contacts in brain and in the peripheral nervous system. Plays a role in neurite outgrowth in response to contactin binding. Plays a role in mediating cell-cell contacts between Schwann cells and axons. Plays a role in the formation and maintenance of the nodes of Ranvier on myelinated axons. Nodes of Ranvier contain clustered sodium channels that are crucial for the saltatory propagation of action potentials along myelinated axons. During development, nodes of Ranvier are formed by the fusion of two heminodes. Required for normal clustering of sodium channels at heminodes; not required for the formation of mature nodes with normal sodium channel clusters. Required, together with GLDN, for maintaining NFASC and sodium channel clusters at mature nodes of Ranvier. This Mus musculus (Mouse) protein is Neuronal cell adhesion molecule (Nrcam).